Here is a 434-residue protein sequence, read N- to C-terminus: MTHAAIDQALADAYRRFTDANPASQRQFEAQARYMPGANSRSVLFYAPFPLTIARGEGAALWDADGHRYADFIAEYTAGVYGHSAPEIRDAVIEAMQGGINLTGHNLLEGRLARLICERFPQIEQLRFTNSGTEANLMALTAALHFTGRRKIVVFSGGYHGGVLGFGARPSPTTVPFDFLVLPYNDAQTARAQIERHGPEIAVVLVEPMQGASGCIPGQPDFLQALRESATQVGALLVFDEVMTSRLAPHGLANKLGIRSDLTTLGKYIGGGMSFGAFGGRADVMALFDPRTGPLAHSGTFNNNVMTMAAGYAGLTKLFTPEAAGALAERGEALRARLNALCANEGVAMQFTGIGSLMNAHFVQGDVRSSEDLAAVDGRLRQLLFFHLLNEDIYSSPRGFVVLSLPLTDADIDRYVAAIGSFIGGHGALLPRAN.

Arg-41 contributes to the (S)-3-amino-3-phenylpropanoate binding site. 132–133 (GT) lines the pyridoxal 5'-phosphate pocket. Position 267 is an N6-(pyridoxal phosphate)lysine (Lys-267). Thr-300 contacts pyridoxal 5'-phosphate.

Belongs to the class-III pyridoxal-phosphate-dependent aminotransferase family. In terms of assembly, homodimer. Pyridoxal 5'-phosphate is required as a cofactor.

The catalysed reaction is (S)-3-amino-3-phenylpropanoate + 2-oxoglutarate = 3-oxo-3-phenylpropanoate + L-glutamate. The enzyme catalyses (S)-3-amino-3-phenylpropanoate + pyruvate = 3-oxo-3-phenylpropanoate + L-alanine. Its activity is regulated as follows. Is inhibited by 2-aminooxyacetate (AOA), a mimic of beta-alanine and a known inhibitor of aminotransferases. Functionally, aminotransferase that acts exclusively on beta-amino acids and exhibits a broad substrate range in vitro, accepting meta-, para- and, to a lesser extent, ortho-substituted beta-phenylalanine derivatives as amino donors, and 2-oxoglutarate or pyruvate as amino acceptors. Is highly enantioselective toward (S)-beta-phenylalanine (is not active with (R)-beta-phenylalanine) and derivatives with different substituents on the phenyl ring, allowing the kinetic resolution of various racemic beta-amino acids to yield (R)-beta-amino acids with &gt;95% enantiomeric excess (ee). Highly prefers aromatic beta-amino acids over aliphatic beta-amino acids; cannot use beta-alanine or beta-glutamate as substrate. Is likely involved in the beta-phenylalanine degradation pathway that allows V.paradoxus strain CBF3 to use beta-phenylalanine as a sole nitrogen source. The polypeptide is Beta-phenylalanine transaminase (Variovorax paradoxus).